The primary structure comprises 277 residues: Putative phosphoenolpyruvate synthase regulatory protein (277 aa).

Gly-157–Thr-164 serves as a coordination point for ADP.

Belongs to the pyruvate, phosphate/water dikinase regulatory protein family. PSRP subfamily.

The enzyme catalyses [pyruvate, water dikinase] + ADP = [pyruvate, water dikinase]-phosphate + AMP + H(+). It catalyses the reaction [pyruvate, water dikinase]-phosphate + phosphate + H(+) = [pyruvate, water dikinase] + diphosphate. Its function is as follows. Bifunctional serine/threonine kinase and phosphorylase involved in the regulation of the phosphoenolpyruvate synthase (PEPS) by catalyzing its phosphorylation/dephosphorylation. This Vibrio atlanticus (strain LGP32) (Vibrio splendidus (strain Mel32)) protein is Putative phosphoenolpyruvate synthase regulatory protein.